Here is a 345-residue protein sequence, read N- to C-terminus: Dihydroorotate dehydrogenase (quinone) (345 aa).

FMN is bound by residues 65–69 (AGLDK) and Thr89. Lys69 contacts substrate. Substrate is bound at residue 114–118 (NRLGF). The FMN site is built by Asn146 and Asn179. Asn179 contacts substrate. Ser182 acts as the Nucleophile in catalysis. Residue Asn184 coordinates substrate. FMN-binding residues include Lys224 and Thr252. Residue 253-254 (NT) participates in substrate binding. FMN contacts are provided by residues Gly275, Gly304, and 325–326 (YT).

Belongs to the dihydroorotate dehydrogenase family. Type 2 subfamily. Monomer. It depends on FMN as a cofactor.

It is found in the cell membrane. The enzyme catalyses (S)-dihydroorotate + a quinone = orotate + a quinol. The protein operates within pyrimidine metabolism; UMP biosynthesis via de novo pathway; orotate from (S)-dihydroorotate (quinone route): step 1/1. Catalyzes the conversion of dihydroorotate to orotate with quinone as electron acceptor. This Leptothrix cholodnii (strain ATCC 51168 / LMG 8142 / SP-6) (Leptothrix discophora (strain SP-6)) protein is Dihydroorotate dehydrogenase (quinone).